The primary structure comprises 475 residues: CAAX prenyl protease 1 homolog (475 aa).

Residues 1-18 (MGMWASVDAMWDFPAEKR) are Lumenal-facing. A helical transmembrane segment spans residues 19–39 (IFGAVLLFSWTVYLWETFLAQ). Residues 40 to 81 (RQRRIYKTTTRVPAELEQIMDSDTFEKSRLYQLDKSTFSFWS) lie on the Nuclear side of the membrane. The helical transmembrane segment at 82-102 (GLYSEVEGTFILLFGGIPYLW) threads the bilayer. Residues 103–123 (RLSGQFCSSAGFGPEYEIIQS) lie on the Lumenal side of the membrane. A helical transmembrane segment spans residues 124 to 144 (LVFLLLATLFSALTGLPWSLY). The Nuclear portion of the chain corresponds to 145 to 170 (NTFVIEEKHGFNHQTLEFFMKDAIKK). A helical membrane pass occupies residues 171–191 (FIVTQCILLPVSALLLYIIKI). The Lumenal segment spans residues 192 to 195 (GGDY). The chain crosses the membrane as a helical span at residues 196-216 (FFIYAWLFTLVVSLVLVTIYA). Residues 217–347 (DYIAPLFDKF…GHWKLGHTVK (131 aa)) lie on the Nuclear side of the membrane. A disordered region spans residues 293–314 (DNQEESGMEARNEGEGDSEEVK). The span at 300 to 314 (MEARNEGEGDSEEVK) shows a compositional bias: basic and acidic residues. Position 335 (His335) interacts with Zn(2+). Glu336 is a catalytic residue. His339 serves as a coordination point for Zn(2+). A helical membrane pass occupies residues 348–368 (NIIISQMNSFLCFFLFAVLIG). Over 369 to 382 (RRELFAAFGFYDSQ) the chain is Lumenal. Residues 383–405 (PTLIGLLIIFQFIFSPYNEVLSF) form a helical membrane-spanning segment. At 406–475 (CLTVLSRRFE…LQALKNAKQD (70 aa)) the chain is on the nuclear side. Residue Glu415 participates in Zn(2+) binding.

This sequence belongs to the peptidase M48A family. Requires Zn(2+) as cofactor.

It is found in the endoplasmic reticulum membrane. The protein resides in the nucleus inner membrane. Its subcellular location is the early endosome membrane. It localises to the late endosome membrane. It carries out the reaction Hydrolyzes the peptide bond -P2-(S-farnesyl or geranylgeranyl)C-P1'-P2'-P3'-COOH where P1' and P2' are amino acids with aliphatic side chains and P3' is any C-terminal residue.. Its activity is regulated as follows. Inhibited by HIV protease inhibitors, such as lopinavir, tipranavir and nelfinavir, leading to defects in lamin A/LMNA maturation and accumulation of prelamin-A/C precursors in cells. This causes defects in nuclear envelope integrity and release of DNA in the cytosol, activating the AIM2 inflammasome. Its function is as follows. Transmembrane metalloprotease whose catalytic activity is critical for processing lamin A/LMNA on the inner nuclear membrane and clearing clogged translocons on the endoplasmic reticulum. Proteolytically removes the C-terminal three residues of farnesylated proteins. Also plays an antiviral role independently of its protease activity by restricting enveloped RNA and DNA viruses. Mechanistically, controls IFITM antiviral pathway to hinder viruses from breaching the endosomal barrier by modulating membrane fluidity. The protein is CAAX prenyl protease 1 homolog of Mus musculus (Mouse).